A 435-amino-acid chain; its full sequence is Probable tRNA pseudouridine synthase D (435 aa).

Catalysis depends on aspartate 95, which acts as the Nucleophile. The TRUD domain occupies 170–396 (GVPNYFGTQR…SSGTRRAVLV (227 aa)).

It belongs to the pseudouridine synthase TruD family.

The catalysed reaction is uridine(13) in tRNA = pseudouridine(13) in tRNA. In terms of biological role, could be responsible for synthesis of pseudouridine from uracil-13 in transfer RNAs. In Natronomonas pharaonis (strain ATCC 35678 / DSM 2160 / CIP 103997 / JCM 8858 / NBRC 14720 / NCIMB 2260 / Gabara) (Halobacterium pharaonis), this protein is Probable tRNA pseudouridine synthase D.